Reading from the N-terminus, the 540-residue chain is Glucose-6-phosphate isomerase (540 aa).

Glutamate 350 (proton donor) is an active-site residue. Residues histidine 381 and lysine 503 contribute to the active site.

This sequence belongs to the GPI family.

It is found in the cytoplasm. It carries out the reaction alpha-D-glucose 6-phosphate = beta-D-fructose 6-phosphate. It participates in carbohydrate biosynthesis; gluconeogenesis. Its pathway is carbohydrate degradation; glycolysis; D-glyceraldehyde 3-phosphate and glycerone phosphate from D-glucose: step 2/4. In terms of biological role, catalyzes the reversible isomerization of glucose-6-phosphate to fructose-6-phosphate. This is Glucose-6-phosphate isomerase from Burkholderia mallei (strain NCTC 10247).